The chain runs to 1253 residues: Elongator complex protein 1 (1253 aa).

The segment at 830–1253 (VDVNMLFDHA…KPFEKLSILI (424 aa)) is mediates dimerization. The segment covering 1126-1141 (YTKSSNSSKMTRNTSK) has biased composition (polar residues). The tract at residues 1126–1153 (YTKSSNSSKMTRNTSKNNRRLERKRARG) is disordered. The tract at residues 1137–1155 (RNTSKNNRRLERKRARGKK) is required for binding to tRNA. The segment covering 1142–1153 (NNRRLERKRARG) has biased composition (basic residues).

The protein belongs to the ELP1/IKA1 family. As to quaternary structure, homodimer. Component of the elongator complex.

Its subcellular location is the cytoplasm. The protein operates within tRNA modification; 5-methoxycarbonylmethyl-2-thiouridine-tRNA biosynthesis. In terms of biological role, component of the elongator complex, a multiprotein complex which is required for multiple tRNA modifications, including mcm5U (5-methoxycarbonylmethyl uridine), mcm5s2U (5-methoxycarbonylmethyl-2-thiouridine), and ncm5U (5-carbamoylmethyl uridine). The elongator complex catalyzes formation of carboxymethyluridine in the wobble base at position 34 in tRNAs. ELP1 binds to tRNA, mediating interaction of the elongator complex with tRNA. This Schizosaccharomyces pombe (strain 972 / ATCC 24843) (Fission yeast) protein is Elongator complex protein 1.